A 300-amino-acid polypeptide reads, in one-letter code: Mycothiol acetyltransferase (300 aa).

2 N-acetyltransferase domains span residues 4-140 (IDWR…RPLT) and 151-300 (VRLA…AVAD). 1D-myo-inositol 2-(L-cysteinylamino)-2-deoxy-alpha-D-glucopyranoside is bound at residue Asp36. 79 to 81 (LVV) is an acetyl-CoA binding site. Residues Glu178, Lys219, and Glu227 each contribute to the 1D-myo-inositol 2-(L-cysteinylamino)-2-deoxy-alpha-D-glucopyranoside site. Position 231–233 (231–233 (VGV)) interacts with acetyl-CoA. Tyr269 contacts 1D-myo-inositol 2-(L-cysteinylamino)-2-deoxy-alpha-D-glucopyranoside. 274–279 (NGAAVK) is an acetyl-CoA binding site.

Belongs to the acetyltransferase family. MshD subfamily. In terms of assembly, monomer.

The enzyme catalyses 1D-myo-inositol 2-(L-cysteinylamino)-2-deoxy-alpha-D-glucopyranoside + acetyl-CoA = mycothiol + CoA + H(+). In terms of biological role, catalyzes the transfer of acetyl from acetyl-CoA to desacetylmycothiol (Cys-GlcN-Ins) to form mycothiol. The protein is Mycothiol acetyltransferase of Mycobacterium sp. (strain JLS).